Reading from the N-terminus, the 751-residue chain is Zinc finger protein 184 (751 aa).

The region spanning 28–99 (VTFKDVIVDF…EPSIPVGTCA (72 aa)) is the KRAB domain. Phosphoserine occurs at positions 117, 122, and 199. Residues 191-202 (SNLVTQEPSPEE) show a composition bias toward polar residues. Residues 191-212 (SNLVTQEPSPEETSTKRSIKQN) form a disordered region. Residue K206 forms a Glycyl lysine isopeptide (Lys-Gly) (interchain with G-Cter in SUMO2) linkage. 19 C2H2-type zinc fingers span residues 222-244 (CKCN…QRTH), 250-272 (YKCN…QRIH), 278-300 (YKCD…QRIH), 306-328 (YKCD…QRIH), 334-356 (YTCN…QKIH), 362-384 (FKCD…QKIH), 390-412 (YKCN…HMIH), 418-440 (YECN…QKTH), 446-468 (YDCA…LKIH), 474-496 (YKCN…RRIH), 502-524 (FECS…QKTH), 530-552 (YECK…ERIH), 558-580 (YQCH…RKIH), 586-608 (YKCN…KRIH), 614-636 (YECA…QKTH), 642-664 (YQCN…QRIH), 670-692 (YKCN…QNTH), 698-720 (YNCN…QRIH), and 726-748 (FGCN…QRLH).

Belongs to the krueppel C2H2-type zinc-finger protein family. In terms of tissue distribution, predominant expression in testis.

The protein resides in the nucleus. In terms of biological role, may be involved in transcriptional regulation. This Homo sapiens (Human) protein is Zinc finger protein 184 (ZNF184).